The following is a 305-amino-acid chain: Putative lipid kinase SAR0780 (305 aa).

The region spanning 3–139 is the DAGKc domain; the sequence is NKYTHGVLFY…YDVIKINNQY (137 aa). Residues S44, 74–80, and T101 each bind ATP; that span reads GDGTVNE. Residues S220, D223, and E225 each coordinate Mg(2+). E281 (proton acceptor) is an active-site residue.

This sequence belongs to the diacylglycerol/lipid kinase family. The cofactor is Mg(2+).

Functionally, may catalyze the ATP-dependent phosphorylation of lipids other than diacylglycerol (DAG). In fact, is not able to exhibit diacylglycerol kinase activity in vitro. The sequence is that of Putative lipid kinase SAR0780 from Staphylococcus aureus (strain MRSA252).